A 285-amino-acid polypeptide reads, in one-letter code: Nucleotide-binding protein Geob_2284 (285 aa).

Residue 8-15 (GLSGSGKS) coordinates ATP. 59–62 (DIRG) serves as a coordination point for GTP.

Belongs to the RapZ-like family.

Displays ATPase and GTPase activities. In Geotalea daltonii (strain DSM 22248 / JCM 15807 / FRC-32) (Geobacter daltonii), this protein is Nucleotide-binding protein Geob_2284.